The sequence spans 507 residues: Maturase K (507 aa).

Belongs to the intron maturase 2 family. MatK subfamily.

The protein resides in the plastid. The protein localises to the chloroplast. Usually encoded in the trnK tRNA gene intron. Probably assists in splicing its own and other chloroplast group II introns. The protein is Maturase K of Ranunculus acris (Meadow buttercup).